A 718-amino-acid chain; its full sequence is Ribosomal RNA large subunit methyltransferase K/L (718 aa).

Residues 43–154 enclose the THUMP domain; the sequence is TQYRILLWSR…QDELVVSLDL (112 aa).

The protein belongs to the methyltransferase superfamily. RlmKL family.

It is found in the cytoplasm. It carries out the reaction guanosine(2445) in 23S rRNA + S-adenosyl-L-methionine = N(2)-methylguanosine(2445) in 23S rRNA + S-adenosyl-L-homocysteine + H(+). It catalyses the reaction guanosine(2069) in 23S rRNA + S-adenosyl-L-methionine = N(2)-methylguanosine(2069) in 23S rRNA + S-adenosyl-L-homocysteine + H(+). Functionally, specifically methylates the guanine in position 2445 (m2G2445) and the guanine in position 2069 (m7G2069) of 23S rRNA. The sequence is that of Ribosomal RNA large subunit methyltransferase K/L from Histophilus somni (strain 2336) (Haemophilus somnus).